Here is a 225-residue protein sequence, read N- to C-terminus: NAD(P)H-quinone oxidoreductase subunit K, chloroplastic (225 aa).

Residues Cys-43, Cys-44, Cys-108, and Cys-139 each coordinate [4Fe-4S] cluster.

The protein belongs to the complex I 20 kDa subunit family. In terms of assembly, NDH is composed of at least 16 different subunits, 5 of which are encoded in the nucleus. [4Fe-4S] cluster is required as a cofactor.

The protein resides in the plastid. It is found in the chloroplast thylakoid membrane. The enzyme catalyses a plastoquinone + NADH + (n+1) H(+)(in) = a plastoquinol + NAD(+) + n H(+)(out). The catalysed reaction is a plastoquinone + NADPH + (n+1) H(+)(in) = a plastoquinol + NADP(+) + n H(+)(out). Functionally, NDH shuttles electrons from NAD(P)H:plastoquinone, via FMN and iron-sulfur (Fe-S) centers, to quinones in the photosynthetic chain and possibly in a chloroplast respiratory chain. The immediate electron acceptor for the enzyme in this species is believed to be plastoquinone. Couples the redox reaction to proton translocation, and thus conserves the redox energy in a proton gradient. In Daucus carota (Wild carrot), this protein is NAD(P)H-quinone oxidoreductase subunit K, chloroplastic.